Reading from the N-terminus, the 606-residue chain is MSFQSINIDKWLKNAVAAQGFKKMTPVQANAIPLFLKNKDLVVEAVTGSGKTLAYLLPCFDKVTRRDTDETGLGALIVAPTRELATQIFNVTKELLAYQPDSLDGGKKLVADMYIGGKGTLTNDLASFREKNPSVVIGTPGRLNEMLSHISSKHLEILILDEADTLIDMGFQRTLQSIISQLPKQRRTGLFSATMNDTVSSFLKIAGLRNSVRVSVTVTSKKIDTRTPSSLAIQSLVIPPIYKVQCMIHLLCTIEYEKAIVFFSSCASVEYFNSLFLTYKLPFEIVALHGQQVQSNRSRNFEKFKKSNKKTVLFTTDIASRGLDIPNVDFVLQLDPPLDPKSFSHRCGRAGRAGRAGVAIVLLNDGREEEYEELLRVRKVPITRIDTPIEALDLSRLKVLTHELRKIVSKDRDLYDKGLRAFVSHVRAYTKHHASFIFRIKDLDLGQLATAYALLHLPKMPELKDTEISENIFKKFDIDYATIPYRDQVREQARRRRLEVEKTEPKKLARPAKIKNEAWSKQKEVKEKRNTRREKRKSKKEFLKAQKNEASNNLKQEIVSKAGAQETENDDLIDEESDALSELEEDYRQLKKSKKRKNQASFGFSM.

Residues 1-29 (MSFQSINIDKWLKNAVAAQGFKKMTPVQA) carry the Q motif motif. One can recognise a Helicase ATP-binding domain in the interval 32 to 213 (IPLFLKNKDL…KIAGLRNSVR (182 aa)). 45 to 52 (AVTGSGKT) contributes to the ATP binding site. The DEAD box signature appears at 161-164 (DEAD). Residues 246-400 (CMIHLLCTIE…ALDLSRLKVL (155 aa)) form the Helicase C-terminal domain. Residues 521–574 (KQKEVKEKRNTRREKRKSKKEFLKAQKNEASNNLKQEIVSKAGAQETENDDLID) form a disordered region. The stretch at 521 to 601 (KQKEVKEKRN…KSKKRKNQAS (81 aa)) forms a coiled coil. Basic residues predominate over residues 529–539 (RNTRREKRKSK).

Belongs to the DEAD box helicase family. DDX55/SPB4 subfamily. Component of pre-60S ribosomal complexes.

The protein localises to the nucleus. It localises to the nucleolus. The enzyme catalyses ATP + H2O = ADP + phosphate + H(+). ATP-binding RNA helicase involved in the biogenesis of 60S ribosomal subunits. Binds 90S pre-ribosomal particles and dissociates from pre-60S ribosomal particles after processing of 27SB pre-rRNA. Required for the normal formation of 18S rRNA through the processing of pre-rRNAs at sites A0, A1 and A2, and the normal formation of 25S and 5.8S rRNAs through the processing of pre-rRNAs at sites C1 and C2. In Schizosaccharomyces pombe (strain 972 / ATCC 24843) (Fission yeast), this protein is ATP-dependent rRNA helicase spb4.